We begin with the raw amino-acid sequence, 642 residues long: Threonine--tRNA ligase (642 aa).

In terms of domain architecture, TGS spans 1–61 (MPIITLPDGS…EEDASLEIIT (61 aa)). The interval 244–535 (DHRKIGKQLD…LIEEYAGFFP (292 aa)) is catalytic. Residues Cys-335, His-386, and His-512 each contribute to the Zn(2+) site.

Belongs to the class-II aminoacyl-tRNA synthetase family. In terms of assembly, homodimer. It depends on Zn(2+) as a cofactor.

The protein resides in the cytoplasm. It carries out the reaction tRNA(Thr) + L-threonine + ATP = L-threonyl-tRNA(Thr) + AMP + diphosphate + H(+). Its function is as follows. Catalyzes the attachment of threonine to tRNA(Thr) in a two-step reaction: L-threonine is first activated by ATP to form Thr-AMP and then transferred to the acceptor end of tRNA(Thr). Also edits incorrectly charged L-seryl-tRNA(Thr). In Vibrio parahaemolyticus serotype O3:K6 (strain RIMD 2210633), this protein is Threonine--tRNA ligase.